Here is a 1190-residue protein sequence, read N- to C-terminus: Plakophilin-4 (1190 aa).

Residues 1 to 32 (MPAPEQGSLVEEGQPQTHQEAVSTGPGMEPET) are disordered. The stretch at 36-63 (TILASVKEQELQFQRLTRELEVERQIVA) forms a coiled coil. The disordered stretch occupies residues 73 to 347 (AESPSIASTS…KRSGMTAVPQ (275 aa)). S75 bears the Phosphoserine mark. Residues 77–86 (SIASTSSTEK) are compositionally biased toward polar residues. T84 carries the post-translational modification Phosphothreonine. Phosphoserine occurs at positions 106, 132, 136, and 139. 3 stretches are compositionally biased toward polar residues: residues 138 to 156 (GSLG…SDSG), 163 to 203 (FHNS…QPSV), and 213 to 229 (SVPS…STGV). Phosphoserine is present on residues S220, S230, and S235. Low complexity predominate over residues 230-241 (SPSRGSLRTSLG). Positions 247–266 (PSVTDSRPLNPSAYSSSTLP) are enriched in polar residues. An omega-N-methylarginine mark is found at R253 and R269. Phosphoserine is present on residues S272, S280, S313, S326, and S336. Positions 289 to 323 (SVTSRQTSNPNGPVPQYQTTTRVGSPLTLTDAQTR) are enriched in polar residues. Low complexity predominate over residues 324–337 (VASPSQGQVGSSSP). Y371 is modified (phosphotyrosine). Phosphoserine occurs at positions 391, 402, and 405. T411 carries the post-translational modification Phosphothreonine. Y414 is modified (phosphotyrosine). Residues S421, S426, and S437 each carry the phosphoserine modification. Phosphotyrosine is present on Y477. S509, S511, and S514 each carry phosphoserine. 3 ARM repeats span residues 517 to 556 (KDPR…HLCF), 559 to 598 (NKVK…NLVF), and 603 to 643 (DENK…NLSS). A compositionally biased stretch (basic and acidic residues) spans 772–781 (GKESPSKDSE). A disordered region spans residues 772–809 (GKESPSKDSEPSCWGKKKKKKKRTPQEDQWDGVGPIPG). S775 bears the Phosphoserine mark. Residues 861–900 (AYIRAAVRKEKGLPILVELLRMDNDRVVSSVATALRNMAL) form an ARM 4 repeat. 2 positions are modified to phosphothreonine: T1012 and T1016. 4 positions are modified to phosphoserine: S1044, S1090, S1099, and S1133.

The protein belongs to the beta-catenin family. In terms of assembly, interacts (via the C-terminus) with FRMPD2 (via the PDZ 2 domain). Interacts with PDZD2. Interacts with RHOA; the interaction is detected at the midbody. Interacts with ECT2; the interaction is detected at the midbody. Interacts with CCDC85B.

The protein localises to the cell junction. Its subcellular location is the desmosome. It is found in the cytoplasm. It localises to the cytoskeleton. The protein resides in the spindle. The protein localises to the spindle pole. Its subcellular location is the midbody. It is found in the cell membrane. In terms of biological role, plays a role as a regulator of Rho activity during cytokinesis. May play a role in junctional plaques. The chain is Plakophilin-4 (Pkp4) from Mus musculus (Mouse).